Consider the following 911-residue polypeptide: Gem-associated protein 4a (911 aa).

Component of the core survival motor neuron (SMN) complex composed of Smn, Gem2, Gem3, rig/Gem5 and one of 3 almost identical Gem4 paralogs encoded by Glos/Gem4a, Gem4b or Gem4c. Interacts with Smn; the interaction is probably indirect.

Component of the survival motor neuron (SMN) complex that catalyzes the assembly of small nuclear ribonucleoproteins (snRNPs), the building blocks of the spliceosome, and thereby plays an important role in the splicing of cellular pre-mRNAs. One of 3 almost identical paralogs (Glos/Gem4a, Gem4b and Gem4c), resulting from a genomic triplication, that have some redundant function. Required for neuromuscular function and organismal viability. The protein is Gem-associated protein 4a of Drosophila melanogaster (Fruit fly).